The chain runs to 70 residues: Conotoxin Im11.11 (70 aa).

Residues 1-25 form the signal peptide; it reads MFRLTSVGCILLVIAFLNLVGLTNA. 4 disulfides stabilise this stretch: Cys26–Cys40, Cys33–Cys45, Cys39–Cys49, and Cys44–Cys53. Position 56 is a proline amide (Pro56). A propeptide spanning residues 60–70 is cleaved from the precursor; the sequence is TRLQGFFKHRR.

This sequence belongs to the conotoxin I2 superfamily. As to expression, expressed by the venom duct.

It is found in the secreted. In terms of biological role, probable neurotoxin. The chain is Conotoxin Im11.11 from Conus imperialis (Imperial cone).